The following is a 227-amino-acid chain: dTTP/UTP pyrophosphatase (227 aa).

The disordered stretch occupies residues Met-1 to Ile-21. The active-site Proton acceptor is the Asp-87.

The protein belongs to the Maf family. YhdE subfamily. A divalent metal cation is required as a cofactor.

It localises to the cytoplasm. The catalysed reaction is dTTP + H2O = dTMP + diphosphate + H(+). It carries out the reaction UTP + H2O = UMP + diphosphate + H(+). Its function is as follows. Nucleoside triphosphate pyrophosphatase that hydrolyzes dTTP and UTP. May have a dual role in cell division arrest and in preventing the incorporation of modified nucleotides into cellular nucleic acids. The protein is dTTP/UTP pyrophosphatase of Rhodopirellula baltica (strain DSM 10527 / NCIMB 13988 / SH1).